Reading from the N-terminus, the 928-residue chain is Dual serine/threonine and tyrosine protein kinase (928 aa).

Residues 1 to 14 (MEGDGVPWGSEPES) are compositionally biased toward low complexity. Disordered stretches follow at residues 1-22 (MEGDGVPWGSEPESGPGPGGGG) and 55-81 (LRGSQPRGCPSSPAEGGEAGRGPAGDV). Residues 394-430 (RKKENELYESLMNIANRKQEEMKDMIVETLNTMKEEL) are a coiled coil. The 255-residue stretch at 651-905 (PKLGQELGRG…PLLGIVQPML (255 aa)) folds into the Protein kinase domain. ATP is bound by residues 657–665 (LGRGQYGVV) and K680. D776 acts as the Proton acceptor in catalysis.

It belongs to the protein kinase superfamily. Ser/Thr protein kinase family.

Its subcellular location is the cytoplasm. The protein resides in the cell membrane. The protein localises to the apical cell membrane. It is found in the basolateral cell membrane. It localises to the cell junction. It catalyses the reaction L-seryl-[protein] + ATP = O-phospho-L-seryl-[protein] + ADP + H(+). It carries out the reaction L-threonyl-[protein] + ATP = O-phospho-L-threonyl-[protein] + ADP + H(+). The catalysed reaction is L-tyrosyl-[protein] + ATP = O-phospho-L-tyrosyl-[protein] + ADP + H(+). Its function is as follows. Acts as a positive regulator of ERK phosphorylation downstream of fibroblast growth factor-receptor activation. Involved in the regulation of both caspase-dependent apoptosis and caspase-independent cell death. In the skin, it plays a predominant role in suppressing caspase-dependent apoptosis in response to UV stress in a range of dermal cell types. In Bos taurus (Bovine), this protein is Dual serine/threonine and tyrosine protein kinase (DSTYK).